The sequence spans 79 residues: UPF0154 protein Lm4b_01315 (79 aa).

Residues 2 to 22 traverse the membrane as a helical segment; it reads WIYILVGIICLLAGLAGGFFI. Over residues 57–66 the composition is skewed to polar residues; sequence KINQMMSAMN. The disordered stretch occupies residues 57–79; the sequence is KINQMMSAMNKQQEKEKPKKTKK.

This sequence belongs to the UPF0154 family.

The protein localises to the cell membrane. This Listeria monocytogenes serotype 4b (strain CLIP80459) protein is UPF0154 protein Lm4b_01315.